Reading from the N-terminus, the 309-residue chain is 2-dehydropantoate 2-reductase (309 aa).

Residues 7 to 12 (GAGSIG), R31, and K74 each bind NADP(+). Residues 8–10 (AGS), R31, K74, and C84 each bind CoA. NADP(+) is bound by residues N100 and A124. The active-site Proton donor is K180. Residues K180, N184, N188, N198, and 247–250 (NYNS) contribute to the substrate site. R257 provides a ligand contact to CoA. E262 provides a ligand contact to NADP(+).

Belongs to the ketopantoate reductase family. Homodimer.

The protein resides in the cytoplasm. It carries out the reaction (R)-pantoate + NAD(+) = 2-dehydropantoate + NADH + H(+). The catalysed reaction is (R)-pantoate + NADP(+) = 2-dehydropantoate + NADPH + H(+). The protein operates within cofactor biosynthesis; coenzyme A biosynthesis. With respect to regulation, regulated by feedback inhibition by coenzyme A (CoA). CoA acts by competing with NAD(P)H. A disulfide bond is formed between CoA and Cys-84, which indicates an irreversible inhibition upon binding of CoA. Catalyzes the NAD(P)H-dependent reduction of ketopantoate into pantoic acid. Prefers NADH rather than NADPH as the electron donor. The chain is 2-dehydropantoate 2-reductase from Thermococcus kodakarensis (strain ATCC BAA-918 / JCM 12380 / KOD1) (Pyrococcus kodakaraensis (strain KOD1)).